A 421-amino-acid polypeptide reads, in one-letter code: D-amino acid dehydrogenase (421 aa).

3-17 lines the FAD pocket; it reads VLILGSGVIGVTSAY.

Belongs to the DadA oxidoreductase family. FAD serves as cofactor.

It carries out the reaction a D-alpha-amino acid + A + H2O = a 2-oxocarboxylate + AH2 + NH4(+). Its function is as follows. Oxidative deamination of D-amino acids. The protein is D-amino acid dehydrogenase of Bradyrhizobium diazoefficiens (strain JCM 10833 / BCRC 13528 / IAM 13628 / NBRC 14792 / USDA 110).